The following is a 372-amino-acid chain: Bifunctional enzyme IspD/IspF (372 aa).

Residues 1-211 (MLDISLIMLG…SALKAPENEL (211 aa)) are 2-C-methyl-D-erythritol 4-phosphate cytidylyltransferase. The tract at residues 212–372 (FVGSGFDVHE…SLKFYNWTQI (161 aa)) is 2-C-methyl-D-erythritol 2,4-cyclodiphosphate synthase. D218 and H220 together coordinate a divalent metal cation. Residues 218–220 (DVH) and 244–245 (HS) contribute to the 4-CDP-2-C-methyl-D-erythritol 2-phosphate site. H252 lines the a divalent metal cation pocket. 4-CDP-2-C-methyl-D-erythritol 2-phosphate is bound by residues 266 to 268 (DIG), 271 to 275 (FPDTD), 342 to 345 (TTTE), F349, and R352.

In the N-terminal section; belongs to the IspD/TarI cytidylyltransferase family. IspD subfamily. This sequence in the C-terminal section; belongs to the IspF family. Requires a divalent metal cation as cofactor.

It carries out the reaction 2-C-methyl-D-erythritol 4-phosphate + CTP + H(+) = 4-CDP-2-C-methyl-D-erythritol + diphosphate. The enzyme catalyses 4-CDP-2-C-methyl-D-erythritol 2-phosphate = 2-C-methyl-D-erythritol 2,4-cyclic diphosphate + CMP. It participates in isoprenoid biosynthesis; isopentenyl diphosphate biosynthesis via DXP pathway; isopentenyl diphosphate from 1-deoxy-D-xylulose 5-phosphate: step 2/6. The protein operates within isoprenoid biosynthesis; isopentenyl diphosphate biosynthesis via DXP pathway; isopentenyl diphosphate from 1-deoxy-D-xylulose 5-phosphate: step 4/6. Functionally, bifunctional enzyme that catalyzes the formation of 4-diphosphocytidyl-2-C-methyl-D-erythritol from CTP and 2-C-methyl-D-erythritol 4-phosphate (MEP) (IspD), and catalyzes the conversion of 4-diphosphocytidyl-2-C-methyl-D-erythritol 2-phosphate (CDP-ME2P) to 2-C-methyl-D-erythritol 2,4-cyclodiphosphate (ME-CPP) with a corresponding release of cytidine 5-monophosphate (CMP) (IspF). The polypeptide is Bifunctional enzyme IspD/IspF (Campylobacter concisus (strain 13826)).